We begin with the raw amino-acid sequence, 365 residues long: Outer membrane porin protein LC (365 aa).

Positions 1–23 (MKKLTVAISAVAASVLMAMSAQA) are cleaved as a signal peptide.

It belongs to the Gram-negative porin family. In terms of assembly, homotrimer.

The protein resides in the host cell outer membrane. Functionally, forms pores that allow passive diffusion of small molecules across the host cell outer membrane. The sequence is that of Outer membrane porin protein LC (LC) from Enterobacteria phage PA-2 (Bacteriophage PA-2).